Here is a 638-residue protein sequence, read N- to C-terminus: Octopamine receptor 1 (638 aa).

The Extracellular portion of the chain corresponds to 1 to 28 (MSRDIFMKRLRLHLLFDEVAMVTHIVGD). A helical membrane pass occupies residues 29–53 (VLSSVLLCAVVLLVLVGNTLVVAAV). The Cytoplasmic portion of the chain corresponds to 54–64 (ATSRKLRTVTN). The chain crosses the membrane as a helical span at residues 65 to 87 (VFIVNLACADLLLGVLVLPFSAV). At 88-102 (NEIKDVWIFGHVWCQ) the chain is on the extracellular side. The cysteines at positions 101 and 230 are disulfide-linked. A helical transmembrane segment spans residues 103-124 (VWLAVDVWLCTASILNLCCISL). Topologically, residues 125–147 (DRYLAITRPIRYPGLMSAKRAKT) are cytoplasmic. Residues 148 to 167 (LVAGVWLFSFVICCPPLIGW) traverse the membrane as a helical segment. Residues 168 to 239 (NDGGDGIMDY…CELTNSRGYR (72 aa)) are Extracellular-facing. Asn-178, Asn-207, and Asn-215 each carry an N-linked (GlcNAc...) asparagine glycan. The helical transmembrane segment at 240 to 259 (IYAALGSFFIPMLVMVFFYL) threads the bilayer. Over 260 to 520 (QIYRAAVKTI…FNREKKAAKT (261 aa)) the chain is Cytoplasmic. A helical transmembrane segment spans residues 521–545 (LAIIVGAFIMCWMPFFTIYLVGAFC). Residues 546 to 551 (ENCISP) lie on the Extracellular side of the membrane. Residues 552-575 (IVFSVAFWLGYCNSAMNPCVYALF) form a helical membrane-spanning segment. The Cytoplasmic portion of the chain corresponds to 576–638 (SRDFRFAFRK…TASGGNGGYT (63 aa)). Positions 618 to 638 (DDAKSSSDIGPTASGGNGGYT) are disordered.

It belongs to the G-protein coupled receptor 1 family. Expressed in the central nervous system.

The protein localises to the cell membrane. G-protein coupled receptor for octopamine (OA), which is a neurotransmitter, neurohormone, and neuromodulator in invertebrates. Activation of this receptor by octopamine induces an increase in both inositol phosphates and cyclic AMP. The coupling to adenylyl cyclase seems to be less efficient than the coupling to phospholipase C. The rank order of potency for agonists is p-synephrine &gt;= clonidine &gt; p-octopamine = xylometazoline = phenylephrine = oxymetazoline &gt; B-HT920 &gt; serotonin = p-tyramine &gt; epinephrine &gt; norepinephrine &gt; methoxamine = dopamine = histamine. For antagonists, the rank order is yohimbine &gt; chlopromazine / spiperone &gt; phentolamine &gt; mianserine &gt; rauwolscine &gt; prazosin &gt; alprenolol / propanolol &gt; pindolol. The polypeptide is Octopamine receptor 1 (Lymnaea stagnalis (Great pond snail)).